The primary structure comprises 101 residues: Large ribosomal subunit protein uL24c (101 aa).

The protein belongs to the universal ribosomal protein uL24 family. Part of the 50S ribosomal subunit.

It is found in the plastid. Its subcellular location is the chloroplast. Its function is as follows. One of two assembly initiator proteins, it binds directly to the 5'-end of the 23S rRNA, where it nucleates assembly of the 50S subunit. The protein is Large ribosomal subunit protein uL24c (rpl24) of Guillardia theta (Cryptophyte).